A 279-amino-acid chain; its full sequence is MVIKAKSPAGFAEKYIIESIWNGRFPPGSILPAERELSELIGVTRTTLREVLQRLARDGWLTIQHGKPTKVNQFMETSGLHILDTLMTLDVDNATNIVEDLLAARTNISPIFMRYAFKANKENSERTIKNVIESCEALVNASSWDDFIASSPYADKVLQSVKEDNEKDEAKRQEILIAKTFNFYDYMLFQRLAFHSGNQIYGLIFNGLKKLYDRVGSYYFSNPASRDLALRFYRQLLETCETGQREQLPVVIRHYGMESAQIWNEMKKQLPTNFTEDDS.

Residues 6–74 (KSPAGFAEKY…HGKPTKVNQF (69 aa)) form the HTH gntR-type domain. A DNA-binding region (H-T-H motif) is located at residues 34 to 53 (ERELSELIGVTRTTLREVLQ).

In terms of assembly, homodimer.

Its subcellular location is the cytoplasm. Multifunctional regulator of fatty acid metabolism. The chain is Fatty acid metabolism regulator protein from Vibrio parahaemolyticus serotype O3:K6 (strain RIMD 2210633).